We begin with the raw amino-acid sequence, 326 residues long: N-(2-amino-2-carboxyethyl)-L-glutamate synthase (326 aa).

Lys47 is modified (N6-(pyridoxal phosphate)lysine). Residues Asn77, 185–189 (STTGS), and Ser272 contribute to the pyridoxal 5'-phosphate site.

Belongs to the cysteine synthase/cystathionine beta-synthase family. SbnA subfamily. As to quaternary structure, homodimer. Pyridoxal 5'-phosphate serves as cofactor.

The catalysed reaction is O-phospho-L-serine + L-glutamate = N-[(2S)-2-amino-2-carboxyethyl]-L-glutamate + phosphate + H(+). The protein operates within siderophore biosynthesis. Functionally, catalyzes the synthesis of N-((2S)-2-amino-2-carboxyethyl)-L-glutamate (ACEGA) from O-phospho-L-serine and L-glutamate. Involved in the biosynthesis of L-2,3-diaminopropionic acid (L-Dap), a precursor of staphyloferrin B and antibiotics. In Staphylococcus aureus (strain N315), this protein is N-(2-amino-2-carboxyethyl)-L-glutamate synthase (sbnA).